The primary structure comprises 418 residues: Hydroxysqualene dehydroxylase (418 aa).

Belongs to the HpnE family.

The catalysed reaction is squalene + FAD + H2O + H(+) = hydroxysqualene + FADH2. Its pathway is secondary metabolite biosynthesis; hopanoid biosynthesis. Its function is as follows. Involved in the biosynthesis of the hopanoid precursor squalene (SQ) from farnesyl diphosphate (FPP). Catalyzes the third (last) step, the reduction of hydroxysqualene (HSQ) to SQ. The polypeptide is Hydroxysqualene dehydroxylase (Rhodopseudomonas palustris (strain ATCC BAA-98 / CGA009)).